A 408-amino-acid polypeptide reads, in one-letter code: Exodeoxyribonuclease 7 large subunit (408 aa).

Belongs to the XseA family. As to quaternary structure, heterooligomer composed of large and small subunits.

It localises to the cytoplasm. The catalysed reaction is Exonucleolytic cleavage in either 5'- to 3'- or 3'- to 5'-direction to yield nucleoside 5'-phosphates.. Its function is as follows. Bidirectionally degrades single-stranded DNA into large acid-insoluble oligonucleotides, which are then degraded further into small acid-soluble oligonucleotides. The chain is Exodeoxyribonuclease 7 large subunit from Alkaliphilus oremlandii (strain OhILAs) (Clostridium oremlandii (strain OhILAs)).